The chain runs to 357 residues: tRNA-specific 2-thiouridylase MnmA (357 aa).

ATP-binding positions include 11–18 (AMSGGVDS) and leucine 37. Cysteine 102 serves as the catalytic Nucleophile. Cysteine 102 and cysteine 197 are disulfide-bonded. Residue glycine 126 participates in ATP binding. The tract at residues 148–150 (KDQ) is interaction with tRNA. Cysteine 197 serves as the catalytic Cysteine persulfide intermediate. The interaction with tRNA stretch occupies residues 301–302 (RY).

The protein belongs to the MnmA/TRMU family.

The protein resides in the cytoplasm. The catalysed reaction is S-sulfanyl-L-cysteinyl-[protein] + uridine(34) in tRNA + AH2 + ATP = 2-thiouridine(34) in tRNA + L-cysteinyl-[protein] + A + AMP + diphosphate + H(+). In terms of biological role, catalyzes the 2-thiolation of uridine at the wobble position (U34) of tRNA, leading to the formation of s(2)U34. The chain is tRNA-specific 2-thiouridylase MnmA from Dehalococcoides mccartyi (strain ATCC BAA-2266 / KCTC 15142 / 195) (Dehalococcoides ethenogenes (strain 195)).